A 142-amino-acid polypeptide reads, in one-letter code: Group IIE secretory phospholipase A2 (142 aa).

A signal peptide spans 1-19 (MKPPIALACLCLLVPLAGG). Ca(2+) is bound by residues aspartate 41, glycine 43, tyrosine 45, glycine 47, and glycine 49. Cystine bridges form between cysteine 44/cysteine 135, cysteine 46/cysteine 62, cysteine 61/cysteine 115, cysteine 67/cysteine 142, cysteine 68/cysteine 108, cysteine 77/cysteine 101, and cysteine 95/cysteine 106. Histidine 65 is an active-site residue. Aspartate 66 contacts Ca(2+). The active site involves aspartate 109. Ca(2+)-binding residues include tyrosine 130 and asparagine 132.

Belongs to the phospholipase A2 family. The cofactor is Ca(2+). As to expression, highly expressed in skin and uterus, and at lower levels in various other tissues. Expressed in hair follicles, specifically localized in companion cells of the outer root sheath and cuticular cells of the inner root sheath in hair follicles during anagen. Expressed in white and brown adipose tissue.

Its subcellular location is the secreted. It is found in the cytoplasm. The catalysed reaction is a 1,2-diacyl-sn-glycero-3-phosphoethanolamine + H2O = a 1-acyl-sn-glycero-3-phosphoethanolamine + a fatty acid + H(+). The enzyme catalyses 1-hexadecanoyl-2-(9Z-octadecenoyl)-sn-glycero-3-phosphoethanolamine + H2O = 1-hexadecanoyl-sn-glycero-3-phosphoethanolamine + (9Z)-octadecenoate + H(+). It catalyses the reaction 1-hexadecanoyl-2-(9Z,12Z-octadecadienoyl)-sn-glycero-3-phosphoethanolamine + H2O = 1-hexadecanoyl-sn-glycero-3-phosphoethanolamine + (9Z,12Z)-octadecadienoate + H(+). It carries out the reaction 1-hexadecanoyl-2-(5Z,8Z,11Z,14Z-eicosatetraenoyl)-sn-glycero-3-phosphoethanolamine + H2O = 1-hexadecanoyl-sn-glycero-3-phosphoethanolamine + (5Z,8Z,11Z,14Z)-eicosatetraenoate + H(+). The catalysed reaction is 1,2-dihexadecanoyl-sn-glycero-3-phospho-(1'-sn-glycerol) + H2O = 1-hexadecanoyl-sn-glycero-3-phospho-(1'-sn-glycerol) + hexadecanoate + H(+). The enzyme catalyses 1-hexadecanoyl-2-(9Z-octadecenoyl)-sn-glycero-3-phosphoglycerol + H2O = 1-hexadecanoyl-sn-glycero-3-phosphoglycerol + (9Z)-octadecenoate + H(+). It catalyses the reaction a 1,2-diacyl-sn-glycero-3-phosphocholine + H2O = a 1-acyl-sn-glycero-3-phosphocholine + a fatty acid + H(+). It carries out the reaction 1,2-dihexadecanoyl-sn-glycero-3-phosphocholine + H2O = 1-hexadecanoyl-sn-glycero-3-phosphocholine + hexadecanoate + H(+). The catalysed reaction is 1-hexadecanoyl-2-(9Z-octadecenoyl)-sn-glycero-3-phosphocholine + H2O = 1-hexadecanoyl-sn-glycero-3-phosphocholine + (9Z)-octadecenoate + H(+). The enzyme catalyses 1-hexadecanoyl-2-(9Z,12Z-octadecadienoyl)-sn-glycero-3-phosphocholine + H2O = (9Z,12Z)-octadecadienoate + 1-hexadecanoyl-sn-glycero-3-phosphocholine + H(+). It catalyses the reaction 1-hexadecanoyl-2-(4Z,7Z,10Z,13Z,16Z,19Z-docosahexaenoyl)-sn-glycero-3-phosphocholine + H2O = (4Z,7Z,10Z,13Z,16Z,19Z)-docosahexaenoate + 1-hexadecanoyl-sn-glycero-3-phosphocholine + H(+). Functionally, secretory calcium-dependent phospholipase A2 that primarily targets extracellular phospholipids. Hydrolyzes the ester bond of the fatty acyl group attached at sn-2 position of phospholipids (phospholipase A2 activity), releasing various unsaturated fatty acids including oleoate, linoleoate, arachidonate, docosahexaenoate and lysophosphatidylethanolamines in preference to lysophosphatidylcholines. In response to high-fat diet, hydrolyzes minor lipoprotein phospholipids including phosphatidylserines, phosphatidylinositols and phosphatidylglycerols, altering lipoprotein composition and fat storage in adipose tissue and liver. May act in an autocrine and paracrine manner. Contributes to lipid remodeling of cellular membranes and generation of lipid mediators involved in pathogen clearance. Cleaves sn-2 fatty acyl chains of phosphatidylglycerols and phosphatidylethanolamines, which are major components of membrane phospholipids in bacteria. Acts as a hair follicle phospholipase A2. Selectively releases lysophosphatidylethanolamines (LPE) and various unsaturated fatty acids in skin to regulate hair follicle homeostasis. May regulate the inflammatory response by releasing arachidonate, a precursor of prostaglandins and leukotrienes. Upon allergen exposure, may participate in allergic inflammatory response by enhancing leukotriene C4 synthesis and degranulation in mast cells. This chain is Group IIE secretory phospholipase A2 (Pla2g2e), found in Mus musculus (Mouse).